Here is a 340-residue protein sequence, read N- to C-terminus: Methionine import ATP-binding protein MetN (340 aa).

The ABC transporter domain maps to 2 to 241; it reads IRIENLTKIY…PQSSVAKEFI (240 aa). 38–45 contacts ATP; that stretch reads GLSGAGKS.

It belongs to the ABC transporter superfamily. Methionine importer (TC 3.A.1.24) family. The complex is composed of two ATP-binding proteins (MetN), two transmembrane proteins (MetI) and a solute-binding protein (MetQ).

The protein resides in the cell membrane. It catalyses the reaction L-methionine(out) + ATP + H2O = L-methionine(in) + ADP + phosphate + H(+). The catalysed reaction is D-methionine(out) + ATP + H2O = D-methionine(in) + ADP + phosphate + H(+). In terms of biological role, part of the ABC transporter complex MetNIQ involved in methionine import. Responsible for energy coupling to the transport system. The protein is Methionine import ATP-binding protein MetN of Desulfitobacterium hafniense (strain Y51).